The chain runs to 425 residues: MATAAQPSLELALELMSKVPLIGNISQSTHKIPIQCTGLTREQDGHNDWMHMIRAYYDFQVDDRFQPTKDLAGHVDLKRLVQGRAGAVFWSVYVECPKGENDFSDAVHHASMRDTFQQIDLLQRIMELYSDRMEMAHKADDVMRIFRSGKCASLMGAEGLHQLGNSSSVLRIFHRLGVRYVTLAHAKNNLYVDSATSEAPIHHGLSPQGRDMVREMNRIGMIVDLSHVSEKAMVDALDVSLAPVIFSHSSAYALVPHVRNVPDHVLDRLKQNRGIIMISFIPWLTNKDPEKATVENVVDHVLHVGNRIGFDHLGLGSDFDGMPSHVQGLEDVSKYPNVVAAMLQRGISTENVEKIMGMNVIRVLREVEDVAASQKGLLPVLEDAVPQLWDDGIRAYVKKLYPHAEHDRTGASETTTVDKAIEKDV.

Zn(2+) is bound by residues His-46, Asp-48, and Glu-158. 3 residues coordinate substrate: His-185, Arg-259, and Asp-318.

It belongs to the metallo-dependent hydrolases superfamily. Peptidase M19 family. The cofactor is Zn(2+).

The enzyme catalyses an L-aminoacyl-L-amino acid + H2O = 2 an L-alpha-amino acid. Dipeptidase; part of the gene cluster that mediates the biosynthesis of an unusual class of epipolythiodioxopiperazines (ETPs) lacking the reactive thiol group important for toxicity. Firstly, L-tyrosine is prenylated by tcpD, before undergoing condensation with L-glycine in a reaction catalyzed by the NRPS tcpP leading to the diketopiperazine (DKP) backbone. Afterwards the alpha-carbon of tyrosine is oxidized by the cytochrome P450 tcpC to form a hydroxyl group. However, in contrast other ETP biosynthesis pathways studied so far, tcpC is not able to bishydroxylate the DKP at both alpha-carbon positions, but hydroxylates the alpha-carbon of the tyrosine part and the nitrogen of the glycine part. The next steps involve an alpha,beta-elimination reaction catalyzed by tcpI, a methylation by the methyltransferase tcpN the action of the four enzyme cascade tcpG/K/J/I. Due to a dysfunctional cytochrome P450 monooxygenase tcpC, the pathway leads to the biosynthesis of probable non-toxic metabolites lacking the reactive thiol group. In Claviceps purpurea (strain 20.1) (Ergot fungus), this protein is Dipeptidase tcpJ.